The sequence spans 385 residues: DNA replication and repair protein RecF (385 aa).

30 to 37 (GPNGFGKT) is an ATP binding site.

It belongs to the RecF family.

The protein resides in the cytoplasm. In terms of biological role, the RecF protein is involved in DNA metabolism; it is required for DNA replication and normal SOS inducibility. RecF binds preferentially to single-stranded, linear DNA. It also seems to bind ATP. This Mycobacterium marinum (strain ATCC BAA-535 / M) protein is DNA replication and repair protein RecF.